Consider the following 563-residue polypeptide: PTS system fructose-specific EIIB'BC component (563 aa).

PTS EIIB type-2 domains are found at residues 1–85 (MKTL…KGHA) and 104–201 (KRVV…KAVA). Cys112 (phosphocysteine intermediate; for EIIB activity) is an active-site residue. Cys112 is modified (phosphocysteine; by EIIA). In terms of domain architecture, PTS EIIC type-2 spans 226-561 (AYRHLLTGVS…KRPEVDAVAK (336 aa)). The next 9 membrane-spanning stretches (helical) occupy residues 236–256 (YMLP…AFGI), 274–294 (GGSA…FSIA), 304–324 (IGGM…IAGF), 349–369 (ILII…YLIG), 382–402 (WLQT…GGMM), 430–450 (MAAI…ATMV), 463–483 (GKAA…PFAA), 489–509 (VLPC…AIGA), and 518–538 (LFVL…VAII).

It is found in the cell inner membrane. The catalysed reaction is D-fructose(out) + N(pros)-phospho-L-histidyl-[protein] = D-fructose 1-phosphate(in) + L-histidyl-[protein]. The phosphoenolpyruvate-dependent sugar phosphotransferase system (sugar PTS), a major carbohydrate active transport system, catalyzes the phosphorylation of incoming sugar substrates concomitantly with their translocation across the cell membrane. The enzyme II FruAB PTS system is involved in fructose transport. The protein is PTS system fructose-specific EIIB'BC component of Escherichia coli (strain K12).